The chain runs to 202 residues: FMN-dependent NADH:quinone oxidoreductase (202 aa).

FMN-binding positions include Ser9, 15 to 17 (SAS), and 94 to 97 (MYNL).

This sequence belongs to the azoreductase type 1 family. In terms of assembly, homodimer. FMN serves as cofactor.

The enzyme catalyses 2 a quinone + NADH + H(+) = 2 a 1,4-benzosemiquinone + NAD(+). The catalysed reaction is N,N-dimethyl-1,4-phenylenediamine + anthranilate + 2 NAD(+) = 2-(4-dimethylaminophenyl)diazenylbenzoate + 2 NADH + 2 H(+). Functionally, quinone reductase that provides resistance to thiol-specific stress caused by electrophilic quinones. In terms of biological role, also exhibits azoreductase activity. Catalyzes the reductive cleavage of the azo bond in aromatic azo compounds to the corresponding amines. The chain is FMN-dependent NADH:quinone oxidoreductase from Gluconobacter oxydans (strain 621H) (Gluconobacter suboxydans).